A 308-amino-acid polypeptide reads, in one-letter code: Probable GTP 3',8-cyclase (308 aa).

Residues 4 to 224 (RFGRPLEDLR…QIRKKHFRPR (221 aa)) enclose the Radical SAM core domain. Position 13 (Arg-13) interacts with GTP. Residues Cys-20, Cys-24, and Cys-27 each contribute to the [4Fe-4S] cluster site. GTP is bound at residue Lys-60. S-adenosyl-L-methionine is bound at residue Gly-64. Thr-90 contacts GTP. Ser-114 provides a ligand contact to S-adenosyl-L-methionine. Lys-151 contributes to the GTP binding site. Residues Cys-245 and Cys-248 each contribute to the [4Fe-4S] cluster site. 250-252 (RIR) lines the GTP pocket. Cys-262 is a [4Fe-4S] cluster binding site.

Belongs to the radical SAM superfamily. MoaA family. Requires [4Fe-4S] cluster as cofactor.

The catalysed reaction is GTP + AH2 + S-adenosyl-L-methionine = (8S)-3',8-cyclo-7,8-dihydroguanosine 5'-triphosphate + 5'-deoxyadenosine + L-methionine + A + H(+). Its pathway is cofactor biosynthesis; molybdopterin biosynthesis. Functionally, catalyzes the cyclization of GTP to (8S)-3',8-cyclo-7,8-dihydroguanosine 5'-triphosphate. The polypeptide is Probable GTP 3',8-cyclase (Saccharolobus islandicus (strain M.16.27) (Sulfolobus islandicus)).